Here is a 453-residue protein sequence, read N- to C-terminus: Pentatricopeptide repeat-containing protein At2g38420, mitochondrial (453 aa).

The N-terminal 77 residues, 1–77 (MARSSSWHRM…CEPTPQAYRF (77 aa)), are a transit peptide targeting the mitochondrion. PPR repeat units lie at residues 107–141 (PESI…RCVP), 142–177 (SAYT…GVRL), 178–212 (EEST…SVIV), 213–249 (DPRL…RFSP), 250–284 (GLRD…RVEP), 285–319 (DLVC…GLAP), 320–354 (DVYT…GSEP), 355–389 (NVVT…GVNR), and 390–424 (NSHT…NVFV).

Belongs to the PPR family. P subfamily.

It is found in the mitochondrion. In Arabidopsis thaliana (Mouse-ear cress), this protein is Pentatricopeptide repeat-containing protein At2g38420, mitochondrial.